A 93-amino-acid chain; its full sequence is UPF0457 protein GTNG_2792 (93 aa).

The protein belongs to the UPF0457 family.

The polypeptide is UPF0457 protein GTNG_2792 (Geobacillus thermodenitrificans (strain NG80-2)).